A 189-amino-acid chain; its full sequence is Large ribosomal subunit protein uL5 (189 aa).

This sequence belongs to the universal ribosomal protein uL5 family. As to quaternary structure, part of the 50S ribosomal subunit; part of the 5S rRNA/L5/L18/L25 subcomplex. Contacts the 5S rRNA and the P site tRNA. Forms a bridge to the 30S subunit in the 70S ribosome.

This is one of the proteins that bind and probably mediate the attachment of the 5S RNA into the large ribosomal subunit, where it forms part of the central protuberance. In the 70S ribosome it contacts protein S13 of the 30S subunit (bridge B1b), connecting the 2 subunits; this bridge is implicated in subunit movement. Contacts the P site tRNA; the 5S rRNA and some of its associated proteins might help stabilize positioning of ribosome-bound tRNAs. The sequence is that of Large ribosomal subunit protein uL5 from Kineococcus radiotolerans (strain ATCC BAA-149 / DSM 14245 / SRS30216).